Reading from the N-terminus, the 278-residue chain is 3-methyl-2-oxobutanoate hydroxymethyltransferase (278 aa).

Mg(2+)-binding residues include aspartate 43 and aspartate 82. 3-methyl-2-oxobutanoate contacts are provided by residues 43–44 (DS), aspartate 82, and lysine 112. Glutamate 114 is a Mg(2+) binding site. Glutamate 181 acts as the Proton acceptor in catalysis.

Belongs to the PanB family. Homodecamer; pentamer of dimers. Mg(2+) is required as a cofactor.

The protein localises to the cytoplasm. The enzyme catalyses 3-methyl-2-oxobutanoate + (6R)-5,10-methylene-5,6,7,8-tetrahydrofolate + H2O = 2-dehydropantoate + (6S)-5,6,7,8-tetrahydrofolate. It participates in cofactor biosynthesis; (R)-pantothenate biosynthesis; (R)-pantoate from 3-methyl-2-oxobutanoate: step 1/2. Its function is as follows. Catalyzes the reversible reaction in which hydroxymethyl group from 5,10-methylenetetrahydrofolate is transferred onto alpha-ketoisovalerate to form ketopantoate. In Desulfitobacterium hafniense (strain DSM 10664 / DCB-2), this protein is 3-methyl-2-oxobutanoate hydroxymethyltransferase.